Here is a 247-residue protein sequence, read N- to C-terminus: MDNFFLGLSCQEENNFWDLIVADISGDRSVSVPIRSAFRSYMKDTELRMMSPKISSSKVNVKKRMVNLLRKNWEEKKNTVAPEKERSRRHMLKERTRREKQKQSYLALHSLLPFATKNDKNSIVEKAVDEIAKLQRLKKELVRRIKVIEEKSAKDGHDEMSETKVRVNLKEPLSGLDSMLEALHYLKSMGTKLKTVHANFSPQEFSATMTIETQIRGEEVEKRVERRLQETEWKLLFLPEASFYKDY.

A bHLH domain is found at 85 to 134 (ERSRRHMLKERTRREKQKQSYLALHSLLPFATKNDKNSIVEKAVDEIAKL).

In terms of assembly, homodimer.

Its subcellular location is the nucleus. This chain is Transcription factor bHLH92 (BHLH92), found in Arabidopsis thaliana (Mouse-ear cress).